Consider the following 100-residue polypeptide: Movement protein TGBp3 (100 aa).

The Lumenal segment spans residues Met1 to Asp41. A helical transmembrane segment spans residues Leu42–Pro59. Over Lys60 to Leu100 the chain is Cytoplasmic.

Belongs to the Tymovirales TGBp3 protein family.

It localises to the host endoplasmic reticulum membrane. Its function is as follows. Plays a role in viral cell-to-cell propagation, by facilitating genome transport to neighboring plant cells through plasmosdesmata. May induce the formation of granular vesicles derived from the Endoplasmic reticulum, which align on actin filaments. This Narcissus mosaic virus (NMV) protein is Movement protein TGBp3.